The chain runs to 637 residues: Penicillin-binding protein 1A (637 aa).

The transglycosylase stretch occupies residues 62 to 224 (LIADLGSERR…NQYDPYSHPE (163 aa)). Residue glutamate 91 is the Proton donor; for transglycosylase activity of the active site. The tract at residues 298-612 (EVYTNVDSKV…RLTPIVGDGF (315 aa)) is transpeptidase. Serine 371 functions as the Acyl-ester intermediate; for transpeptidase activity in the catalytic mechanism.

The protein in the N-terminal section; belongs to the glycosyltransferase 51 family. It in the C-terminal section; belongs to the transpeptidase family.

The protein localises to the secreted. The enzyme catalyses [GlcNAc-(1-&gt;4)-Mur2Ac(oyl-L-Ala-gamma-D-Glu-L-Lys-D-Ala-D-Ala)](n)-di-trans,octa-cis-undecaprenyl diphosphate + beta-D-GlcNAc-(1-&gt;4)-Mur2Ac(oyl-L-Ala-gamma-D-Glu-L-Lys-D-Ala-D-Ala)-di-trans,octa-cis-undecaprenyl diphosphate = [GlcNAc-(1-&gt;4)-Mur2Ac(oyl-L-Ala-gamma-D-Glu-L-Lys-D-Ala-D-Ala)](n+1)-di-trans,octa-cis-undecaprenyl diphosphate + di-trans,octa-cis-undecaprenyl diphosphate + H(+). It catalyses the reaction Preferential cleavage: (Ac)2-L-Lys-D-Ala-|-D-Ala. Also transpeptidation of peptidyl-alanyl moieties that are N-acyl substituents of D-alanine.. It participates in cell wall biogenesis; peptidoglycan biosynthesis. Its function is as follows. Cell wall formation. This is Penicillin-binding protein 1A (ponA) from Streptococcus oralis.